Reading from the N-terminus, the 122-residue chain is Large ribosomal subunit protein uL14 (122 aa).

It belongs to the universal ribosomal protein uL14 family. As to quaternary structure, part of the 50S ribosomal subunit. Forms a cluster with proteins L3 and L19. In the 70S ribosome, L14 and L19 interact and together make contacts with the 16S rRNA in bridges B5 and B8.

Functionally, binds to 23S rRNA. Forms part of two intersubunit bridges in the 70S ribosome. The chain is Large ribosomal subunit protein uL14 from Staphylococcus epidermidis (strain ATCC 35984 / DSM 28319 / BCRC 17069 / CCUG 31568 / BM 3577 / RP62A).